We begin with the raw amino-acid sequence, 104 residues long: Flagellar hook-basal body complex protein FliE (104 aa).

It belongs to the FliE family.

It localises to the bacterial flagellum basal body. The polypeptide is Flagellar hook-basal body complex protein FliE (Salmonella newport (strain SL254)).